Reading from the N-terminus, the 586-residue chain is MATARARAALVFVALLQMAAVVVVRASHVVYPELQSLEAKHVDGKLRTGYHFQPPKHWINDPNGPMYYKGLYHLFYQYNPKGAVWGNIEWAHSVSTDLIDWTALEPGIYPSKTFDEKGCWSGSATVLPSGVPVIMYTGIDPDERQVQNVAYPVNLSDPYLREWYKPDYNPIINPDGGINASAFRDPTTAWYGPDGHWRLLVGSKVNMKGLAVLYRSRDFKKWVKAHHPLHSAHTGMWECPDFFPVAVAGGSRHYRRGVDTAELHDAAVAEEVKYVLKVSLDLTRYEYYTVGWYDHATDRYVPDAAFPDNDYGLRYDYGDFYASKSFYDPAKRRRIVWGWANESDTVPDDRRKGWAGIQAIPRKLWLSADGKQLVQWPVEELKALRAKHVNVTDKVIKKGNYFEVTGFKSVQSDVDMAFAIKDLSKAEEFDPAWRTDAEALCKKLGSDVDGGVGPFGLWALASGDLKERTAVFFRVFKANDSSHVVLMCNDPTRSSYESKIYRPTFAGFVDVDIAKNKQIALRTLIDHSVVESFGARGKTCILTRVYPRKAVGDDAHLFVFNNGESDVKVTNLDAWEMKTPKMNAEE.

The first 26 residues, 1–26 (MATARARAALVFVALLQMAAVVVVRA), serve as a signal peptide directing secretion. Residue Asp-61 is part of the active site. N-linked (GlcNAc...) asparagine glycans are attached at residues Asn-154, Asn-179, Asn-341, Asn-390, and Asn-479.

The protein belongs to the glycosyl hydrolase 32 family.

The protein resides in the secreted. The protein localises to the extracellular space. Its subcellular location is the apoplast. It is found in the cell wall. It catalyses the reaction Hydrolysis of terminal non-reducing beta-D-fructofuranoside residues in beta-D-fructofuranosides.. The protein is Beta-fructofuranosidase, insoluble isoenzyme 3 (CIN3) of Oryza sativa subsp. indica (Rice).